We begin with the raw amino-acid sequence, 307 residues long: Aspartate carbamoyltransferase catalytic subunit (307 aa).

Positions 54 and 55 each coordinate carbamoyl phosphate. Residue Lys-83 participates in L-aspartate binding. Carbamoyl phosphate is bound by residues Arg-104, His-132, and Gln-135. Positions 165 and 228 each coordinate L-aspartate. Positions 267 and 268 each coordinate carbamoyl phosphate.

Belongs to the aspartate/ornithine carbamoyltransferase superfamily. ATCase family. In terms of assembly, heterododecamer (2C3:3R2) of six catalytic PyrB chains organized as two trimers (C3), and six regulatory PyrI chains organized as three dimers (R2).

The enzyme catalyses carbamoyl phosphate + L-aspartate = N-carbamoyl-L-aspartate + phosphate + H(+). Its pathway is pyrimidine metabolism; UMP biosynthesis via de novo pathway; (S)-dihydroorotate from bicarbonate: step 2/3. Catalyzes the condensation of carbamoyl phosphate and aspartate to form carbamoyl aspartate and inorganic phosphate, the committed step in the de novo pyrimidine nucleotide biosynthesis pathway. This is Aspartate carbamoyltransferase catalytic subunit from Clostridium botulinum (strain Eklund 17B / Type B).